A 94-amino-acid chain; its full sequence is Putative septation protein SpoVG (94 aa).

It belongs to the SpoVG family.

Its function is as follows. Could be involved in septation. The polypeptide is Putative septation protein SpoVG (Acholeplasma laidlawii (strain PG-8A)).